Consider the following 108-residue polypeptide: UPF0060 membrane protein Nham_2004 (108 aa).

4 helical membrane-spanning segments follow: residues 5 to 25 (AAYV…WAWL), 31 to 51 (VWWL…LTLV), 61 to 81 (AAYG…VEGL), and 88 to 108 (LTGA…PRQI).

This sequence belongs to the UPF0060 family.

It is found in the cell inner membrane. This is UPF0060 membrane protein Nham_2004 from Nitrobacter hamburgensis (strain DSM 10229 / NCIMB 13809 / X14).